The sequence spans 251 residues: Mycofactocin precursor peptide peptidase (251 aa).

Positions 38, 40, 49, 128, and 167 each coordinate a divalent metal cation.

It belongs to the creatininase superfamily. Homooctamer. Fe(2+) is required as a cofactor. Zn(2+) serves as cofactor.

The catalysed reaction is [mycofactocin precursor peptide]-C-terminal glycyl-N-{5-[(4-hydroxyphenyl)methyl]-4,4-dimethyl-2-oxopyrrolidin-3-yl}acetamide + H2O = [mycofactocin precursor peptide]-C-terminal glycine + 3-amino-5-[(4-hydroxyphenyl)methyl]-4,4-dimethyl-2-pyrrolidin-2-one. Peptidase involved in the biosynthesis of the enzyme cofactor mycofactocin (MFT). Catalyzes cleavage of the MftC-modified MftA peptide to liberate its final two residues, which consist of a cross-linked valine-decarboxylated tyrosine dipeptide (named 3-amino-5-[(4-hydroxyphenyl)methyl]-4,4-dimethyl-2-pyrrolidin-2-one or ADHP). The sequence is that of Mycofactocin precursor peptide peptidase (mftE) from Mycobacterium tuberculosis (strain CDC 1551 / Oshkosh).